Here is a 421-residue protein sequence, read N- to C-terminus: Serine--tRNA ligase (421 aa).

Residue 229 to 231 (TAE) participates in L-serine binding. 260 to 262 (RAE) serves as a coordination point for ATP. Glutamate 283 contributes to the L-serine binding site. Residue 347–350 (EISS) participates in ATP binding. Serine 383 lines the L-serine pocket.

It belongs to the class-II aminoacyl-tRNA synthetase family. Type-1 seryl-tRNA synthetase subfamily. In terms of assembly, homodimer. The tRNA molecule binds across the dimer.

The protein resides in the cytoplasm. It catalyses the reaction tRNA(Ser) + L-serine + ATP = L-seryl-tRNA(Ser) + AMP + diphosphate + H(+). It carries out the reaction tRNA(Sec) + L-serine + ATP = L-seryl-tRNA(Sec) + AMP + diphosphate + H(+). It functions in the pathway aminoacyl-tRNA biosynthesis; selenocysteinyl-tRNA(Sec) biosynthesis; L-seryl-tRNA(Sec) from L-serine and tRNA(Sec): step 1/1. Its function is as follows. Catalyzes the attachment of serine to tRNA(Ser). Is also able to aminoacylate tRNA(Sec) with serine, to form the misacylated tRNA L-seryl-tRNA(Sec), which will be further converted into selenocysteinyl-tRNA(Sec). The sequence is that of Serine--tRNA ligase from Desulfitobacterium hafniense (strain DSM 10664 / DCB-2).